The sequence spans 215 residues: MGREFLDLFEQWAESYDRSVEGYDEQYRDVFAGYDRILSTVADKAGQVVLEFGVGTGNLTKKLLERGKQVYGIEPSAPMRKKAAEKLSGRAVILDGDFLQFPTPPEPIDTIASTYAFHHLTDAEKDEALAKYSQLLHPGGKIVFADTAFRDKEAFRQAIEEARARGFHDLADDLEREYYTTLDVLASLFSKHGFSASFAQQNAFVWVMEAVKQTT.

Residues Gly-53, Glu-74, and Asp-97 each coordinate S-adenosyl-L-methionine.

Belongs to the methyltransferase superfamily. YrrT family.

Its function is as follows. Could be a S-adenosyl-L-methionine-dependent methyltransferase. This is an uncharacterized protein from Geobacillus kaustophilus (strain HTA426).